The following is a 77-amino-acid chain: Conotoxin ArMKLT2-0251 (77 aa).

Residues 1–22 (MKLTCVLIVAVLILTACQLIAA) form the signal peptide. The propeptide occupies 23–46 (DDSRDLKRFSRRKMRDGMLNTKNM). Q49 is subject to Pyrrolidone carboxylic acid. 3 cysteine pairs are disulfide-bonded: C50/C65, C57/C68, and C64/C73.

Belongs to the conotoxin O1 superfamily. In terms of tissue distribution, expressed by the venom duct.

The protein localises to the secreted. The sequence is that of Conotoxin ArMKLT2-0251 from Conus arenatus (Sand-dusted cone).